Here is a 552-residue protein sequence, read N- to C-terminus: DNA ligase (552 aa).

Glu229 provides a ligand contact to ATP. The active-site N6-AMP-lysine intermediate is the Lys231. The ATP site is built by Arg236 and Glu283. The Mg(2+) site is built by Glu283 and Glu377. ATP-binding residues include Lys382 and Lys397.

The protein belongs to the ATP-dependent DNA ligase family. Interacts with host TOP2A and TOP2B. The cofactor is Mg(2+).

It localises to the host cytoplasm. The catalysed reaction is ATP + (deoxyribonucleotide)n-3'-hydroxyl + 5'-phospho-(deoxyribonucleotide)m = (deoxyribonucleotide)n+m + AMP + diphosphate.. Its function is as follows. DNA ligase that seals nicks in double-stranded DNA during DNA replication, DNA recombination and DNA repair. Recruits cellular topoisomerase II to sites of viral replication and assembly. This chain is DNA ligase (OPG180), found in Homo sapiens (Human).